We begin with the raw amino-acid sequence, 477 residues long: Glycogen synthase (477 aa).

Lys15 serves as a coordination point for ADP-alpha-D-glucose.

Belongs to the glycosyltransferase 1 family. Bacterial/plant glycogen synthase subfamily.

It catalyses the reaction [(1-&gt;4)-alpha-D-glucosyl](n) + ADP-alpha-D-glucose = [(1-&gt;4)-alpha-D-glucosyl](n+1) + ADP + H(+). Its pathway is glycan biosynthesis; glycogen biosynthesis. Functionally, synthesizes alpha-1,4-glucan chains using ADP-glucose. This is Glycogen synthase from Klebsiella pneumoniae (strain 342).